Reading from the N-terminus, the 238-residue chain is Ribitol-5-phosphate cytidylyltransferase 2 (238 aa).

Residues 7–10 and 81–87 contribute to the CTP site; these read LAGG and GTDRNET.

Belongs to the IspD/TarI cytidylyltransferase family. TarI subfamily. Heterodimer together with TarJ.

The enzyme catalyses D-ribitol 5-phosphate + CTP + H(+) = CDP-L-ribitol + diphosphate. It functions in the pathway cell wall biogenesis; poly(ribitol phosphate) teichoic acid biosynthesis. Its function is as follows. Catalyzes the transfer of the cytidylyl group of CTP to D-ribitol 5-phosphate. This chain is Ribitol-5-phosphate cytidylyltransferase 2, found in Staphylococcus aureus (strain NCTC 8325 / PS 47).